Reading from the N-terminus, the 422-residue chain is UDP-N-acetylglucosamine 1-carboxyvinyltransferase (422 aa).

Position 23-24 (23-24 (KN)) interacts with phosphoenolpyruvate. R92 is a UDP-N-acetyl-alpha-D-glucosamine binding site. The active-site Proton donor is C116. Position 116 is a 2-(S-cysteinyl)pyruvic acid O-phosphothioketal (C116). UDP-N-acetyl-alpha-D-glucosamine-binding positions include 121–125 (RPVDL), 161–165 (KVSVG), D306, and I328.

The protein belongs to the EPSP synthase family. MurA subfamily.

It is found in the cytoplasm. It catalyses the reaction phosphoenolpyruvate + UDP-N-acetyl-alpha-D-glucosamine = UDP-N-acetyl-3-O-(1-carboxyvinyl)-alpha-D-glucosamine + phosphate. It functions in the pathway cell wall biogenesis; peptidoglycan biosynthesis. Functionally, cell wall formation. Adds enolpyruvyl to UDP-N-acetylglucosamine. This Aliivibrio fischeri (strain MJ11) (Vibrio fischeri) protein is UDP-N-acetylglucosamine 1-carboxyvinyltransferase.